The following is a 506-amino-acid chain: Ent-kaurenoic acid oxidase (506 aa).

Residues A11–V31 traverse the membrane as a helical segment. C451 is a binding site for heme.

The protein belongs to the cytochrome P450 family. Heme is required as a cofactor. As to expression, expressed in roots and panicles. Expressed at low levels in vegetative shoot apices, leaf sheaths, leaf blades and stems.

The protein localises to the endoplasmic reticulum membrane. It catalyses the reaction ent-kaur-16-en-19-oate + 3 reduced [NADPH--hemoprotein reductase] + 3 O2 = gibberellin A12 + 3 oxidized [NADPH--hemoprotein reductase] + 4 H2O + 4 H(+). The enzyme catalyses ent-kaur-16-en-19-oate + reduced [NADPH--hemoprotein reductase] + O2 = ent-7alpha-hydroxykaur-16-en-19-oate + oxidized [NADPH--hemoprotein reductase] + H2O + H(+). It carries out the reaction ent-7alpha-hydroxykaur-16-en-19-oate + reduced [NADPH--hemoprotein reductase] + O2 = gibberellin A12 aldehyde + oxidized [NADPH--hemoprotein reductase] + 2 H2O + H(+). The catalysed reaction is gibberellin A12 aldehyde + reduced [NADPH--hemoprotein reductase] + O2 = gibberellin A12 + oxidized [NADPH--hemoprotein reductase] + H2O + 2 H(+). Its pathway is plant hormone biosynthesis; gibberellin biosynthesis. Functionally, involved in gibberellin (GA) biosynthesis. Catalyzes three successive oxidations of ent-kaurenoic acid giving gibberellin 12 (GA12), a key step in GAs biosynthesis. GAs, which are involved many processes, including stem elongation, play a central role in plant development. Required for pollen germination and elongation. The chain is Ent-kaurenoic acid oxidase from Oryza sativa subsp. japonica (Rice).